Reading from the N-terminus, the 62-residue chain is Pro-MCH variant (62 aa).

Positions 23–41 are NGE-like; the sequence is GSVAFPAENGVQDTESTQE. The tract at residues 29 to 62 is disordered; it reads AENGVQDTESTQEKRETGDEENSAKFPIGRRDFD. Positions 44–56 are NEI-like; the sequence is ETGDEENSAKFPI. The segment at 60 to 62 is melanin-concentrating hormone-like; the sequence is DFD.

It belongs to the melanin-concentrating hormone family.

This chain is Pro-MCH variant (PMCHL1), found in Pan paniscus (Pygmy chimpanzee).